The chain runs to 216 residues: Snake venom metalloproteinase HT-1 (216 aa).

The Disintegrin domain occupies 8–94 (PPVCGNELLE…DCPMDDFHRN (87 aa)). Ca(2+) contacts are provided by V10, N13, L15, E17, E20, and D23. Intrachain disulfides connect C11/C40, C22/C35, C24/C30, C34/C57, C48/C54, C53/C79, C66/C86, C73/C105, C98/C110, C117/C167, C132/C178, C145/C155, C162/C204, and C198/C209. Residues 72-74 (ECD) carry the D/ECD-tripeptide motif. N175 is a glycosylation site (N-linked (GlcNAc...) asparagine).

This sequence belongs to the venom metalloproteinase (M12B) family. P-III subfamily. P-IIIa sub-subfamily. Monomer. Zn(2+) is required as a cofactor. Expressed by the venom gland.

The protein resides in the secreted. Zinc protease from snake venom that induces hemorrhage. The sequence is that of Snake venom metalloproteinase HT-1 from Crotalus ruber ruber (Red diamond rattlesnake).